A 122-amino-acid polypeptide reads, in one-letter code: ETAAEKFQRQHMDTEHSTASSSNYCNLMMKAREMTSDRCKPVNTFIHEPKSVVDAVCXQENVTCKNGQTNCYKSNSRLSITNCRQTGASXYPNCQYETSNLQKQIIVACEGQYVPVHFDAYV.

Substrate-binding residues include lysine 6 and arginine 9. Histidine 11 functions as the Proton acceptor in the catalytic mechanism. Cystine bridges form between cysteine 25-cysteine 83, cysteine 39-cysteine 94, cysteine 57-cysteine 109, and cysteine 64-cysteine 71. Substrate is bound by residues 40 to 44, lysine 65, and arginine 84; that span reads KPVNT. Catalysis depends on histidine 117, which acts as the Proton donor.

The protein belongs to the pancreatic ribonuclease family. In terms of assembly, monomer. Interacts with and forms tight 1:1 complexes with RNH1. Dimerization of two such complexes may occur. Interaction with RNH1 inhibits this protein. As to expression, pancreas.

The protein resides in the secreted. It catalyses the reaction an [RNA] containing cytidine + H2O = an [RNA]-3'-cytidine-3'-phosphate + a 5'-hydroxy-ribonucleotide-3'-[RNA].. It carries out the reaction an [RNA] containing uridine + H2O = an [RNA]-3'-uridine-3'-phosphate + a 5'-hydroxy-ribonucleotide-3'-[RNA].. Endonuclease that catalyzes the cleavage of RNA on the 3' side of pyrimidine nucleotides. Acts on single-stranded and double-stranded RNA. In Notamacropus rufogriseus (Red-necked wallaby), this protein is Ribonuclease pancreatic.